The sequence spans 1509 residues: ABC transporter G family member 38 (1509 aa).

The ABC transporter 1 domain occupies leucine 196–glutamate 467. Position 229–236 (glycine 229–threonine 236) interacts with ATP. One can recognise an ABC transmembrane type-2 1 domain in the interval glutamate 545–methionine 758. The next 7 helical transmembrane spans lie at phenylalanine 563–phenylalanine 583, isoleucine 598–leucine 618, isoleucine 651–phenylalanine 671, leucine 682–leucine 702, valine 707–isoleucine 727, isoleucine 733–phenylalanine 753, and tyrosine 791–leucine 811. The ABC transporter 2 domain maps to methionine 908–proline 1160. ATP is bound at residue glycine 953–threonine 960. Positions asparagine 1233–tyrosine 1447 constitute an ABC transmembrane type-2 2 domain. Helical transmembrane passes span tyrosine 1252–tryptophan 1272, leucine 1284–valine 1304, valine 1336–proline 1356, phenylalanine 1367–methionine 1387, valine 1397–isoleucine 1417, tryptophan 1425–serine 1445, and phenylalanine 1478–alanine 1498.

It belongs to the ABC transporter superfamily. ABCG family. PDR (TC 3.A.1.205) subfamily.

Its subcellular location is the membrane. Its function is as follows. May be a general defense protein. The protein is ABC transporter G family member 38 of Oryza sativa subsp. japonica (Rice).